The sequence spans 274 residues: Large ribosomal subunit protein uL2 (274 aa).

Disordered regions lie at residues 28–55 (APHAPLLEKKSKSGGRNNNGRITTRHVG) and 224–274 (VAMN…RRRK).

This sequence belongs to the universal ribosomal protein uL2 family. In terms of assembly, part of the 50S ribosomal subunit. Forms a bridge to the 30S subunit in the 70S ribosome.

Its function is as follows. One of the primary rRNA binding proteins. Required for association of the 30S and 50S subunits to form the 70S ribosome, for tRNA binding and peptide bond formation. It has been suggested to have peptidyltransferase activity; this is somewhat controversial. Makes several contacts with the 16S rRNA in the 70S ribosome. The chain is Large ribosomal subunit protein uL2 from Pseudomonas putida (strain GB-1).